Consider the following 247-residue polypeptide: Acetate transporter protein patA (247 aa).

Asn-20 is a glycosylation site (N-linked (GlcNAc...) asparagine). 6 consecutive transmembrane segments (helical) span residues Pro-37 to Phe-57, Ala-71 to Val-91, Val-106 to Gly-126, Ala-141 to Met-161, Ala-169 to Ala-189, and Ala-202 to Met-222.

The protein belongs to the acetate uptake transporter (AceTr) (TC 2.A.96) family.

The protein resides in the endoplasmic reticulum membrane. The protein operates within mycotoxin biosynthesis; patulin biosynthesis. Its function is as follows. Acetate transporter protein; part of the gene cluster that mediates the biosynthesis of patulin, an acetate-derived tetraketide mycotoxin produced by several fungal species that shows antimicrobial properties against several bacteria. May be involved in the uptake of acetate, a substrate for the synthesis of 6-methylsalicylic acid by the polyketide synthase patK. The sequence is that of Acetate transporter protein patA from Aspergillus clavatus (strain ATCC 1007 / CBS 513.65 / DSM 816 / NCTC 3887 / NRRL 1 / QM 1276 / 107).